The primary structure comprises 580 residues: Frizzled and smoothened-like protein K (580 aa).

The signal sequence occupies residues 1-18; sequence MRVLFILFLFYFYTYTEA. Over 19–236 the chain is Extracellular; it reads QQYYPIDPTG…QWDNIFDTSD (218 aa). In terms of domain architecture, FZ spans 25 to 154; sequence DPTGKCEQYI…SSDYNLTTYG (130 aa). N-linked (GlcNAc...) asparagine glycosylation is found at N52, N97, N149, N170, and N186. A helical membrane pass occupies residues 237 to 257; sequence AISLVSLLCSVYLFITYMVIN. Over 258–264 the chain is Cytoplasmic; sequence PKRNKYD. Residues 265–285 traverse the membrane as a helical segment; the sequence is YFFSFFVLSIILMSIAGTIGF. Over 286–308 the chain is Extracellular; it reads SVGGTRKLLCPEINRRGVYTDPA. A helical membrane pass occupies residues 309–329; the sequence is VAAAGWIFQFAIINAILWFSI. Residues 330–349 lie on the Cytoplasmic side of the membrane; the sequence is NSFELWFQIKFIKRKLHLIK. The chain crosses the membrane as a helical span at residues 350–370; sequence FYILAVLVISIALSVPLSAIG. Residues 371–391 are Extracellular-facing; sequence EFNAGLGNFVVWIESGKYQNW. Residues 392–412 form a helical membrane-spanning segment; the sequence is FFWGPLGIVLTVGTTFIGLVI. The Cytoplasmic portion of the chain corresponds to 413–434; the sequence is WEIYKIVSSTNKSDFFKLQLKP. The helical transmembrane segment at 435–455 threads the bilayer; it reads LMNMLLIYLTFVYLFGYNFYI. Residues 456–490 are Extracellular-facing; sequence HNSLNGFYGSSEEFKNCIISTDGKDCRIQGPPYSS. The helical transmembrane segment at 491-511 threads the bilayer; that stretch reads ILMFVFCLRIYGVYCIALYGF. The Cytoplasmic portion of the chain corresponds to 512–580; that stretch reads SPKTRSIWSN…SMEPDEIILR (69 aa). The short motif at 514 to 519 is the Lys-Thr-X-X-X-Trp motif, mediates interaction with the PDZ domain of Dvl family members element; sequence KTRSIW. Positions 542 to 580 are disordered; the sequence is TTKGGTSSTDIKMSTNNNSNMDSGGGKSSSMEPDEIILR. Polar residues predominate over residues 551 to 563; it reads DIKMSTNNNSNMD.

The protein belongs to the G-protein coupled receptor Fz/Smo family.

Its subcellular location is the membrane. This chain is Frizzled and smoothened-like protein K (fslK), found in Dictyostelium discoideum (Social amoeba).